The primary structure comprises 330 residues: tRNA U34 carboxymethyltransferase (330 aa).

Carboxy-S-adenosyl-L-methionine contacts are provided by residues Lys-98, Trp-112, Lys-117, Gly-137, 187-188, Met-203, Tyr-207, and Arg-322; that span reads ME. The segment at 309–330 is disordered; it reads NPSKTIEGYPGPKRATLIAEKP.

The protein belongs to the class I-like SAM-binding methyltransferase superfamily. CmoB family. As to quaternary structure, homotetramer.

It catalyses the reaction carboxy-S-adenosyl-L-methionine + 5-hydroxyuridine(34) in tRNA = 5-carboxymethoxyuridine(34) in tRNA + S-adenosyl-L-homocysteine + H(+). Catalyzes carboxymethyl transfer from carboxy-S-adenosyl-L-methionine (Cx-SAM) to 5-hydroxyuridine (ho5U) to form 5-carboxymethoxyuridine (cmo5U) at position 34 in tRNAs. The polypeptide is tRNA U34 carboxymethyltransferase (Marinobacter nauticus (strain ATCC 700491 / DSM 11845 / VT8) (Marinobacter aquaeolei)).